We begin with the raw amino-acid sequence, 647 residues long: Paraneoplastic antigen Ma6E (647 aa).

Disordered regions lie at residues 111–199 (QPQG…AGGA), 227–254 (GAAGEAGGAGEAGAAGEAGGAGEGRAAG), 508–580 (AAAP…VPWG), and 608–647 (RGQEARKPPLEGLQTILEEPENEDEDGAGDEGQPKSSQGK). Gly residues-rich tracts occupy residues 122–149 (GEGGGAGEAGGVGEVGAAGEAGGTGEAG), 158–199 (GEAG…AGGA), and 227–251 (GAAGEAGGAGEAGAAGEAGGAGEGR). Low complexity predominate over residues 517–570 (PAAAQASPAQGNASEAGPGAEDAAEAASATKEAARGAPAAGEGESAPAGPEGLG). A compositionally biased stretch (acidic residues) spans 625–636 (EEPENEDEDGAG).

This is Paraneoplastic antigen Ma6E from Homo sapiens (Human).